We begin with the raw amino-acid sequence, 300 residues long: Oxidoreductase BOA1 (300 aa).

This sequence belongs to the NmrA-type oxidoreductase family. Isoflavone reductase subfamily.

Its pathway is polyketide biosynthesis. Functionally, oxidoreductase; part of the gene cluster A that mediates the biosynthesis of botcinic acid and its botcinin derivatives, acetate-derived polyketides that contribute to virulence when combined with the sesquiterpene botrydial. Botcinic acid and its derivatives have been shown to induce chlorosis and necrosis during host plant infection, but also have antifungal activities. Two polyketide synthases, BOA6 and BOA9, are involved in the biosynthesis of botcinins. BOA6 mediates the formation of the per-methylated tetraketide core by condensation of four units of malonyl-CoA with one unit of acetyl-CoA, which would be methylated in activated methylene groups to yield a bicyclic acid intermediate that could then either be converted to botrylactone derivatives or lose the starter acetate unit through a retro-Claisen type C-C bond cleavage to yield botcinin derivatives. The second polyketide synthase, BOA9, is probably required for the biosynthesis of the tetraketide side chain of botcinins. The methyltransferase (MT) domain within BOA6 is probably responsible for the incorporation of four methyl groups. The trans-enoyl reductase BOA5 might take over the enoyl reductase function of BOA6 that misses an ER domain. The monooxygenases BOA2, BOA3 and BOA4 might be involved in further hydroxylations at C4, C5 and C8, whereas BOA7, close to BOA9, could potentially be involved in the hydroxylation at C4 in the side chain of botcinins. This chain is Oxidoreductase BOA1, found in Botryotinia fuckeliana (strain B05.10) (Noble rot fungus).